Here is a 211-residue protein sequence, read N- to C-terminus: MPTIIMDSCNYTRLGLTEYMTVKGVKKKNISLINDIAQLQNKCQQLKPGVVLINEDCFIHESDASERIRKIILQHPDTLFFIFMAISNIHFEEYLYVRNNLIITSKAIKISTLDSLLNGYFQKKLNLSVRHGTHSEVHPFTLSQTESNMLKMWMSGHDTIQISDKMQIKAKTVSSHKGNIKRKIKTHNKQVIYHVVRLTDNVTSGIYVNER.

One can recognise an HTH luxR-type domain in the interval 135–200; it reads SEVHPFTLSQ…VIYHVVRLTD (66 aa). Residues 159 to 178 constitute a DNA-binding region (H-T-H motif); that stretch reads TIQISDKMQIKAKTVSSHKG.

Belongs to the RcsA family.

In terms of biological role, component of the Rcs signaling system, which controls transcription of numerous genes. Binds to DNA to regulate expression of genes. This Erwinia amylovora (Fire blight bacteria) protein is Transcriptional regulatory protein RcsA.